Reading from the N-terminus, the 565-residue chain is Molybdenum cofactor biosynthesis protein 1 (565 aa).

The segment at 3–367 (LLARHAIRLL…AVQRKKKQHA (365 aa)) is molybdenum cofactor biosynthesis protein A. Positions 64 to 276 (SFGRHHTYLR…LQIIRQRWPD (213 aa)) constitute a Radical SAM core domain. Arginine 73 contributes to the GTP binding site. [4Fe-4S] cluster contacts are provided by cysteine 80 and cysteine 84. Tyrosine 86 is a binding site for S-adenosyl-L-methionine. Residue cysteine 87 coordinates [4Fe-4S] cluster. Arginine 123 provides a ligand contact to GTP. Glycine 127 lines the S-adenosyl-L-methionine pocket. Threonine 154 contacts GTP. Position 178 (serine 178) interacts with S-adenosyl-L-methionine. Lysine 214 provides a ligand contact to GTP. Methionine 248 contributes to the S-adenosyl-L-methionine binding site. [4Fe-4S] cluster is bound by residues cysteine 311 and cysteine 314. 316-318 (RLR) provides a ligand contact to GTP. Cysteine 328 lines the [4Fe-4S] cluster pocket. Residue aspartate 525 is the For molybdenum cofactor biosynthesis protein C activity of the active site.

This sequence in the C-terminal section; belongs to the MoaC family. The protein in the N-terminal section; belongs to the radical SAM superfamily. MoaA family. As to quaternary structure, isoform Mocs1a and isoform Mocs1b probably form a heterooligomer. It depends on [4Fe-4S] cluster as a cofactor.

The catalysed reaction is GTP + AH2 + S-adenosyl-L-methionine = (8S)-3',8-cyclo-7,8-dihydroguanosine 5'-triphosphate + 5'-deoxyadenosine + L-methionine + A + H(+). It catalyses the reaction (8S)-3',8-cyclo-7,8-dihydroguanosine 5'-triphosphate = cyclic pyranopterin phosphate + diphosphate. It participates in cofactor biosynthesis; molybdopterin biosynthesis. Its function is as follows. Isoform Mocs1a and isoform Mocs1b probably form a complex that catalyzes the conversion of 5'-GTP to cyclic pyranopterin monophosphate (cPMP). Mocs1a catalyzes the cyclization of GTP to (8S)-3',8-cyclo-7,8-dihydroguanosine 5'-triphosphate and Mocs1b catalyzes the subsequent conversion of (8S)-3',8-cyclo-7,8-dihydroguanosine 5'-triphosphate to cPMP. In Drosophila melanogaster (Fruit fly), this protein is Molybdenum cofactor biosynthesis protein 1 (Mocs1).